The primary structure comprises 230 residues: Lipopolysaccharide core heptose(II) kinase WaaY (230 aa).

This sequence belongs to the protein kinase superfamily. RfaY/WaaY family.

It carries out the reaction alpha-D-Glc-(1-&gt;3)-[L-alpha-D-Hep-(1-&gt;7)]-L-alpha-D-Hep-(1-&gt;3)-4-O-PO3(2-)-L-alpha-D-Hep-(1-&gt;5)-[alpha-Kdo-(2-&gt;4)]-alpha-Kdo-(2-&gt;6)-lipid A + ATP = alpha-D-Glc-(1-&gt;3)-[L-alpha-D-Hep-(1-&gt;7)]-4-O-PO3(2-)-L-alpha-D-Hep-(1-&gt;3)-4-O-PO3(2-)-L-alpha-D-Hep-(1-&gt;5)-[alpha-Kdo-(2-&gt;4)]-alpha-Kdo-(2-&gt;6)-lipid A + ADP + H(+). The protein operates within bacterial outer membrane biogenesis; LPS core biosynthesis. Kinase involved in the biosynthesis of the core oligosaccharide region of lipopolysaccharide (LPS). Catalyzes the phosphorylation of the second heptose unit (HepII) of the inner core. The sequence is that of Lipopolysaccharide core heptose(II) kinase WaaY from Escherichia coli.